Here is a 410-residue protein sequence, read N- to C-terminus: Cytochrome P450 monooxygenase mpsF (410 aa).

Cysteine 355 is a binding site for heme.

Belongs to the cytochrome P450 family. It depends on heme as a cofactor.

Its pathway is secondary metabolite biosynthesis. Its function is as follows. Cytochrome P450 monooxygenase; part of the gene cluster that mediates the biosynthesis of macrophasetins, 3-decalinoyltetramic acids (DTAs) which feature a tetramate (pyrrolidine-2,4-dione) unit connected to a decalin fragment and that have potent bioactivities. The PKS-NRPS mpsA together with its associated enoylreductase partner mpsG incorporate one unit of acetyl-CoA, seven units of malonyl-CoA, and one unit of L-alanine to assemble the linear tetramic acid intermediate corresponding to the backbone of macrophasetins. Without the Diels-Alderase mpsD, the mpsA/G product can undergo the non-enzymatic intramolecular Diels-Alder (IMDA) reaction to generate both macrophasetin A and macrophasetin B. Catalyzed by mpsD, the linear tetramic acid intermediate is thoroughly converted to macrophasetin A via the endo-IMDA reaction in a regioselective and stereoselective manner. Finally, the cytochrome P450 monooxygenase mpsF catalyzes the hydroxylation at C20 to yield the end product macrophasetin C. This chain is Cytochrome P450 monooxygenase mpsF, found in Macrophomina phaseolina (strain MS6) (Charcoal rot fungus).